A 514-amino-acid polypeptide reads, in one-letter code: Protein nucleotidyltransferase YdiU (514 aa).

ATP-binding residues include Gly90, Gly92, Arg93, Lys113, Asp125, Gly126, Arg176, and Arg183. Catalysis depends on Asp267, which acts as the Proton acceptor. 2 residues coordinate Mg(2+): Asn268 and Asp277. Residue Asp277 participates in ATP binding.

This sequence belongs to the SELO family. It depends on Mg(2+) as a cofactor. Mn(2+) serves as cofactor.

It catalyses the reaction L-seryl-[protein] + ATP = 3-O-(5'-adenylyl)-L-seryl-[protein] + diphosphate. The catalysed reaction is L-threonyl-[protein] + ATP = 3-O-(5'-adenylyl)-L-threonyl-[protein] + diphosphate. The enzyme catalyses L-tyrosyl-[protein] + ATP = O-(5'-adenylyl)-L-tyrosyl-[protein] + diphosphate. It carries out the reaction L-histidyl-[protein] + UTP = N(tele)-(5'-uridylyl)-L-histidyl-[protein] + diphosphate. It catalyses the reaction L-seryl-[protein] + UTP = O-(5'-uridylyl)-L-seryl-[protein] + diphosphate. The catalysed reaction is L-tyrosyl-[protein] + UTP = O-(5'-uridylyl)-L-tyrosyl-[protein] + diphosphate. In terms of biological role, nucleotidyltransferase involved in the post-translational modification of proteins. It can catalyze the addition of adenosine monophosphate (AMP) or uridine monophosphate (UMP) to a protein, resulting in modifications known as AMPylation and UMPylation. In Photobacterium profundum (strain SS9), this protein is Protein nucleotidyltransferase YdiU.